Reading from the N-terminus, the 447-residue chain is GTPase Der (447 aa).

2 consecutive EngA-type G domains span residues 3-167 and 180-353; these read PVVA…HLED and IKLA…KAAN. GTP-binding positions include 9–16, 56–60, 119–122, 186–193, 233–237, and 298–301; these read GRPNVGKS, DTGGF, NKAE, DTAGL, and NKWD. The region spanning 354 to 438 is the KH-like domain; the sequence is CKMSTPILTR…PMRIEFKSST (85 aa).

This sequence belongs to the TRAFAC class TrmE-Era-EngA-EngB-Septin-like GTPase superfamily. EngA (Der) GTPase family. As to quaternary structure, associates with the 50S ribosomal subunit.

Its function is as follows. GTPase that plays an essential role in the late steps of ribosome biogenesis. The protein is GTPase Der of Albidiferax ferrireducens (strain ATCC BAA-621 / DSM 15236 / T118) (Rhodoferax ferrireducens).